The primary structure comprises 189 residues: Putative ankyrin repeat protein L38 (189 aa).

One copy of the ANK repeat lies at 108-137; the sequence is YGKTPLITAIKSGNCIMVKKLIDYGADFNK.

The polypeptide is Putative ankyrin repeat protein L38 (Acanthamoeba polyphaga mimivirus (APMV)).